Consider the following 303-residue polypeptide: Leukocyte immunoglobulin-like receptor subfamily B member 4B (303 aa).

Residues 1-23 (MIAMLTVLLYLALILEPRTAVQA) form the signal peptide. Residues 24 to 238 (GHLPKPIIWA…TEDGLETYQK (215 aa)) are Extracellular-facing. Ig-like C2-type domains follow at residues 42–123 (YTSV…AYEN) and 124–212 (PSLS…KPSN). Cys49 and Cys98 are disulfide-bonded. 3 N-linked (GlcNAc...) asparagine glycosylation sites follow: Asn79, Asn133, and Asn191. The cysteines at positions 144 and 196 are disulfide-linked. A helical membrane pass occupies residues 239–260 (ILIGVLVSFLLLFFLLLFLILI). Residues 261-303 (GYQCRHKNKANASVKNTQSEDNAELNSWNPQNEDPPRELCTPR) are Cytoplasmic-facing. A compositionally biased stretch (polar residues) spans 275–292 (KNTQSEDNAELNSWNPQN). The disordered stretch occupies residues 275–303 (KNTQSEDNAELNSWNPQNEDPPRELCTPR).

Monomer and homodimer. As to expression, expressed on mast cells (at protein level). Also expressed at much lower levels on natural killer cells (at protein level).

Its subcellular location is the cell membrane. Plays a role in mast cell activation. The chain is Leukocyte immunoglobulin-like receptor subfamily B member 4B from Mus musculus (Mouse).